An 827-amino-acid polypeptide reads, in one-letter code: SID1 transmembrane family member 1 (827 aa).

Positions 1-19 (MRGCLRLALLCALPWLLLA) are cleaved as a signal peptide. Residues 20–309 (ASPGHPAKSP…SIKESVYVKS (290 aa)) are Extracellular-facing. N-linked (GlcNAc...) asparagine glycosylation is found at Asn57, Asn67, Asn83, Asn136, and Asn282. Residues 310-330 (SLFSVFIFLSFYLGCLLVGFV) form a helical membrane-spanning segment. At 331 to 442 (HYLRFQRKSI…DRRIVSKKYK (112 aa)) the chain is on the cytoplasmic side. The tract at residues 355-408 (ASHPIAASTPEGSNYGTIDESSSSPGRQMSSSDGGPPGQSDTDSSVEESDFDTM) is disordered. The segment covering 364–374 (PEGSNYGTIDE) has biased composition (polar residues). Over residues 375-397 (SSSSPGRQMSSSDGGPPGQSDTD) the composition is skewed to low complexity. Positions 398–408 (SSVEESDFDTM) are enriched in acidic residues. A helical membrane pass occupies residues 443–463 (IYFWNIITIAVFYALPVIQLV). Topologically, residues 464–494 (ITYQTVVNVTGNQDICYYNFLCAHPLGVLSA) are extracellular. N-linked (GlcNAc...) asparagine glycosylation occurs at Asn471. Residues 495–515 (FNNILSNLGHVLLGFLFLLIV) form a helical membrane-spanning segment. Topologically, residues 516–541 (LRRDILHRRALEAKDIFAVEYGIPKH) are cytoplasmic. Residues 542–562 (FGLFYAMGIALMMEGVLSACY) traverse the membrane as a helical segment. The Extracellular portion of the chain corresponds to 563–572 (HVCPNYSNFQ). Asn567 carries N-linked (GlcNAc...) asparagine glycosylation. A helical transmembrane segment spans residues 573–590 (FDTSFMYMIAGLCMLKLY). Residues 591–600 (QTRHPDINAS) are Cytoplasmic-facing. The chain crosses the membrane as a helical span at residues 601–621 (AYSAYASFAVVIMVTVLGVVF). Residues 622 to 626 (GKNDV) are Extracellular-facing. Residues 627-647 (WFWVIFSAIHVLASLALSTQI) form a helical membrane-spanning segment. The Cytoplasmic portion of the chain corresponds to 648–683 (YYMGRFKIDLGIFRRAAMVFYTDCIQQCSRPLYMDR). A helical membrane pass occupies residues 684-704 (MVLLVVGNLVNWSFALFGLIY). Residues 705–710 (RPRDFA) are Extracellular-facing. The helical transmembrane segment at 711-731 (SYMLGIFICNLLLYLAFYIIM) threads the bilayer. Over 732 to 741 (KLRSSEKVLP) the chain is Cytoplasmic. The helical transmembrane segment at 742 to 762 (VPLFCIVATAVMWAAALYFFF) threads the bilayer. Over 763–791 (QNLSSWEGTPAESREKNRECILLDFFDDH) the chain is Extracellular. Asn764 carries an N-linked (GlcNAc...) asparagine glycan. The chain crosses the membrane as a helical span at residues 792–812 (DIWHFLSATALFFSFLVLLTL). Over 813–827 (DDDLDVVRRDQIPVF) the chain is Cytoplasmic.

Belongs to the SID1 family.

It localises to the membrane. Functionally, in vitro binds long double-stranded RNA (dsRNA) (500 and 700 base pairs), but not dsRNA shorter than 300 bp. Not involved in RNA autophagy, a process in which RNA is directly imported into lysosomes in an ATP-dependent manner, and degraded. The protein is SID1 transmembrane family member 1 (SIDT1) of Homo sapiens (Human).